The chain runs to 127 residues: Major sperm protein 63 (127 aa).

Alanine 2 bears the N-acetylalanine mark. Positions 9–126 (DIQTQPGTKI…RRKNLPIEYN (118 aa)) constitute an MSP domain.

As to expression, sperm.

It is found in the cell projection. Its subcellular location is the pseudopodium. The protein resides in the cytoplasm. The protein localises to the cytoskeleton. In terms of biological role, central component in molecular interactions underlying sperm crawling. Forms an extensive filament system that extends from sperm villipoda, along the leading edge of the pseudopod. The chain is Major sperm protein 63 (msp-63) from Caenorhabditis elegans.